A 308-amino-acid polypeptide reads, in one-letter code: HTH-type transcriptional activator AllS (308 aa).

The HTH lysR-type domain maps to F2–T59. Positions F19–K38 form a DNA-binding region, H-T-H motif.

It belongs to the LysR transcriptional regulatory family.

Functionally, positive regulator essential for the expression of allD operon. Binds to the allD promoter. This Salmonella paratyphi A (strain ATCC 9150 / SARB42) protein is HTH-type transcriptional activator AllS (allS).